The chain runs to 152 residues: Actin-depolymerizing factor 2, isoform c (152 aa).

The region spanning 4 to 147 is the ADF-H domain; sequence GVKVDPSCKN…DEKSVKSDLM (144 aa).

It belongs to the actin-binding proteins ADF family.

In terms of biological role, depolymerizes growing actin filaments in muscle cells; required for the assembly of actin filaments into the functional contractile myofilament lattice of muscle. This Caenorhabditis elegans protein is Actin-depolymerizing factor 2, isoform c.